The chain runs to 33 residues: Pheromone biosynthesis-activating neuropeptide (33 aa).

The tract at residues 1–33 (LADDMPATMADQEVYRPEPEQIDSRNKYFSPRL) is disordered. Residues 13–26 (EVYRPEPEQIDSRN) show a composition bias toward basic and acidic residues. Leu-33 is subject to Leucine amide.

This sequence belongs to the pyrokinin family.

It is found in the secreted. Functionally, involved in the control of pheromone production in females. This chain is Pheromone biosynthesis-activating neuropeptide, found in Lymantria dispar (Gypsy moth).